Reading from the N-terminus, the 630-residue chain is Prolactin receptor (630 aa).

The N-terminal stretch at 1 to 23 (MMTKVGEVLLLLLLPAFVPHTDG) is a signal peptide. The Extracellular portion of the chain corresponds to 24-234 (THYSLPGKPT…VKVPEYLHRE (211 aa)). Fibronectin type-III domains follow at residues 31–128 (KPTE…IVQP) and 130–230 (PPEK…VPEY). Disulfide bonds link Cys37–Cys47 and Cys76–Cys87. N-linked (GlcNAc...) asparagine glycosylation is found at Asn92 and Asn101. Zn(2+) contacts are provided by Asp212 and His213. Positions 216–220 (WSEWS) match the WSXWS motif motif. The chain crosses the membrane as a helical span at residues 235–258 (KSVWILVLVFSAFILLLLTWLIHM). Over 259 to 630 (NSHSLKHCML…DTATVFSVHT (372 aa)) the chain is Cytoplasmic. The short motif at 267 to 275 (MLPPVPGPK) is the Box 1 motif element. The segment at 339 to 389 (KSIGSASDSDSGRGSCDSDNLLMDKSGAPKEEQQQQNQEGDQIGKETQGPK) is disordered. A compositionally biased stretch (low complexity) spans 340-357 (SIGSASDSDSGRGSCDSD). Positions 380–389 (QIGKETQGPK) are enriched in basic and acidic residues.

This sequence belongs to the type I cytokine receptor family. Type 1 subfamily.

Its subcellular location is the membrane. In terms of biological role, this is a receptor for the anterior pituitary hormone prolactin. The polypeptide is Prolactin receptor (prlr) (Oreochromis niloticus (Nile tilapia)).